The primary structure comprises 262 residues: Acyl-[acyl-carrier-protein]--UDP-N-acetylglucosamine O-acyltransferase (262 aa).

It belongs to the transferase hexapeptide repeat family. LpxA subfamily. As to quaternary structure, homotrimer.

Its subcellular location is the cytoplasm. It catalyses the reaction a (3R)-hydroxyacyl-[ACP] + UDP-N-acetyl-alpha-D-glucosamine = a UDP-3-O-[(3R)-3-hydroxyacyl]-N-acetyl-alpha-D-glucosamine + holo-[ACP]. It functions in the pathway glycolipid biosynthesis; lipid IV(A) biosynthesis; lipid IV(A) from (3R)-3-hydroxytetradecanoyl-[acyl-carrier-protein] and UDP-N-acetyl-alpha-D-glucosamine: step 1/6. Involved in the biosynthesis of lipid A, a phosphorylated glycolipid that anchors the lipopolysaccharide to the outer membrane of the cell. This Pasteurella multocida (strain Pm70) protein is Acyl-[acyl-carrier-protein]--UDP-N-acetylglucosamine O-acyltransferase.